A 200-amino-acid chain; its full sequence is LHFPL tetraspan subfamily member 7 protein (200 aa).

The next 4 helical transmembrane spans lie at 5-27 (VWVALGLSLTCTSAFSLISPAWF), 68-88 (VSAVMLLGGWLLLAFNAIFLL), 113-133 (AATAMIVGLLIFPIGLASPFI), and 150-170 (LGWGYMTAILNAVLASLLPII).

It belongs to the TMEM211 family.

Its subcellular location is the membrane. The chain is LHFPL tetraspan subfamily member 7 protein from Homo sapiens (Human).